The sequence spans 194 residues: NADH-quinone oxidoreductase subunit B (194 aa).

Residues 1–26 (MGLTPSATKPEIAQAPQGIVDPSTGR) form a disordered region. Cys-73, Cys-74, Cys-138, and Cys-168 together coordinate [4Fe-4S] cluster.

It belongs to the complex I 20 kDa subunit family. As to quaternary structure, NDH-1 is composed of 14 different subunits. Subunits NuoB, C, D, E, F, and G constitute the peripheral sector of the complex. [4Fe-4S] cluster is required as a cofactor.

It is found in the cell inner membrane. The catalysed reaction is a quinone + NADH + 5 H(+)(in) = a quinol + NAD(+) + 4 H(+)(out). NDH-1 shuttles electrons from NADH, via FMN and iron-sulfur (Fe-S) centers, to quinones in the respiratory chain. The immediate electron acceptor for the enzyme in this species is believed to be ubiquinone. Couples the redox reaction to proton translocation (for every two electrons transferred, four hydrogen ions are translocated across the cytoplasmic membrane), and thus conserves the redox energy in a proton gradient. This is NADH-quinone oxidoreductase subunit B from Xanthobacter autotrophicus (strain ATCC BAA-1158 / Py2).